A 102-amino-acid chain; its full sequence is MSQQPEYTDWQQIVDLVKHSVEQKQHDMLLTMLMTPDEREALVSRVNIVRELLKGELSQRQISQMLGVGIATITRGSNELKLKSDEDKARLNQLLEGTKKGG.

Residues 59 to 82 mediate DNA binding; the sequence is QRQISQMLGVGIATITRGSNELKL.

It belongs to the TrpR family. As to quaternary structure, homodimer.

Its subcellular location is the cytoplasm. In terms of biological role, this protein is an aporepressor. When complexed with L-tryptophan it binds the operator region of the trp operon and prevents the initiation of transcription. The polypeptide is Trp operon repressor homolog (Vibrio vulnificus (strain CMCP6)).